The sequence spans 135 residues: Small ribosomal subunit protein uS17 (135 aa).

The disordered stretch occupies residues 1 to 59 (MAEAKTGAKAAPRVAKAAKAAPKKAAPNDAEAIGAANAANVKGPKHTPRTPKPRGRRKT). Residues 8–42 (AKAAPRVAKAAKAAPKKAAPNDAEAIGAANAANVK) show a composition bias toward low complexity. Positions 43–59 (GPKHTPRTPKPRGRRKT) are enriched in basic residues.

It belongs to the universal ribosomal protein uS17 family. As to quaternary structure, part of the 30S ribosomal subunit.

Functionally, one of the primary rRNA binding proteins, it binds specifically to the 5'-end of 16S ribosomal RNA. This Mycobacterium bovis (strain ATCC BAA-935 / AF2122/97) protein is Small ribosomal subunit protein uS17.